Reading from the N-terminus, the 215-residue chain is Ribose-5-phosphate isomerase A (215 aa).

Substrate-binding positions include 26-29, 79-82, and 92-95; these read TGST, DGAD, and KGGG. The active-site Proton acceptor is glutamate 101. Residue lysine 119 coordinates substrate.

Belongs to the ribose 5-phosphate isomerase family. As to quaternary structure, homodimer.

It catalyses the reaction aldehydo-D-ribose 5-phosphate = D-ribulose 5-phosphate. Its pathway is carbohydrate degradation; pentose phosphate pathway; D-ribose 5-phosphate from D-ribulose 5-phosphate (non-oxidative stage): step 1/1. Functionally, catalyzes the reversible conversion of ribose-5-phosphate to ribulose 5-phosphate. The sequence is that of Ribose-5-phosphate isomerase A from Stenotrophomonas maltophilia (strain R551-3).